The chain runs to 240 residues: Ribosomal RNA small subunit methyltransferase G (240 aa).

S-adenosyl-L-methionine is bound by residues G79, F84, 130-131 (AE), and R149.

This sequence belongs to the methyltransferase superfamily. RNA methyltransferase RsmG family.

Its subcellular location is the cytoplasm. Specifically methylates the N7 position of a guanine in 16S rRNA. This chain is Ribosomal RNA small subunit methyltransferase G, found in Lactobacillus acidophilus (strain ATCC 700396 / NCK56 / N2 / NCFM).